The chain runs to 324 residues: Polycomb complex protein BMI-1-B (324 aa).

Residues 18–57 form an RING-type zinc finger; the sequence is CVLCGGYFIDATTIVECLHSFCKMCIVRYLETSKYCPICD. The Nuclear localization signal motif lies at 81 to 95; the sequence is KLVPGLFKNEMKRRR. A disordered region spans residues 232–324; it reads IKLSSPRNDM…TSHNGSNSLG (93 aa). Over residues 256 to 279 the composition is skewed to low complexity; the sequence is DKPNSPSIVAAPSTSSSMPSPNTP. Composition is skewed to polar residues over residues 280 to 295 and 303 to 324; these read VQSTHPSFPHISTING and NGQTPFSSKVCKTSHNGSNSLG.

In terms of assembly, component of a PRC1-like complex. Homodimer. Interacts with cbx2.

It is found in the nucleus. Functionally, component of a Polycomb group (PcG) multiprotein PRC1-like complex, a complex class required to maintain the transcriptionally repressive state of many genes, including Hox genes, throughout development. PcG PRC1 complex acts via chromatin remodeling and modification of histones; it mediates monoubiquitination of histone H2A 'Lys-119', rendering chromatin heritably changed in its expressibility. In the PRC1 complex, it is required to stimulate the E3 ubiquitin-protein ligase activity of rnf2. The polypeptide is Polycomb complex protein BMI-1-B (bmi1b) (Danio rerio (Zebrafish)).